Here is a 271-residue protein sequence, read N- to C-terminus: Urease accessory protein UreD (271 aa).

It belongs to the UreD family. As to quaternary structure, ureD, UreF and UreG form a complex that acts as a GTP-hydrolysis-dependent molecular chaperone, activating the urease apoprotein by helping to assemble the nickel containing metallocenter of UreC. The UreE protein probably delivers the nickel.

The protein resides in the cytoplasm. Required for maturation of urease via the functional incorporation of the urease nickel metallocenter. The sequence is that of Urease accessory protein UreD from Azorhizobium caulinodans (strain ATCC 43989 / DSM 5975 / JCM 20966 / LMG 6465 / NBRC 14845 / NCIMB 13405 / ORS 571).